The chain runs to 360 residues: Phosphoserine aminotransferase (360 aa).

Position 41 (Arg41) interacts with L-glutamate. Pyridoxal 5'-phosphate is bound by residues Trp101, Thr152, Asp172, and Gln195. Lys196 carries the post-translational modification N6-(pyridoxal phosphate)lysine. 237 to 238 (NT) is a binding site for pyridoxal 5'-phosphate.

Belongs to the class-V pyridoxal-phosphate-dependent aminotransferase family. SerC subfamily. In terms of assembly, homodimer. Pyridoxal 5'-phosphate is required as a cofactor.

The protein resides in the cytoplasm. It catalyses the reaction O-phospho-L-serine + 2-oxoglutarate = 3-phosphooxypyruvate + L-glutamate. It carries out the reaction 4-(phosphooxy)-L-threonine + 2-oxoglutarate = (R)-3-hydroxy-2-oxo-4-phosphooxybutanoate + L-glutamate. The protein operates within amino-acid biosynthesis; L-serine biosynthesis; L-serine from 3-phospho-D-glycerate: step 2/3. Its pathway is cofactor biosynthesis; pyridoxine 5'-phosphate biosynthesis; pyridoxine 5'-phosphate from D-erythrose 4-phosphate: step 3/5. Functionally, catalyzes the reversible conversion of 3-phosphohydroxypyruvate to phosphoserine and of 3-hydroxy-2-oxo-4-phosphonooxybutanoate to phosphohydroxythreonine. This chain is Phosphoserine aminotransferase, found in Burkholderia lata (strain ATCC 17760 / DSM 23089 / LMG 22485 / NCIMB 9086 / R18194 / 383).